The sequence spans 427 residues: Glutamate-1-semialdehyde 2,1-aminomutase (427 aa).

At Lys-265 the chain carries N6-(pyridoxal phosphate)lysine.

Belongs to the class-III pyridoxal-phosphate-dependent aminotransferase family. HemL subfamily. In terms of assembly, homodimer. Requires pyridoxal 5'-phosphate as cofactor.

The protein resides in the cytoplasm. It carries out the reaction (S)-4-amino-5-oxopentanoate = 5-aminolevulinate. The protein operates within porphyrin-containing compound metabolism; protoporphyrin-IX biosynthesis; 5-aminolevulinate from L-glutamyl-tRNA(Glu): step 2/2. This chain is Glutamate-1-semialdehyde 2,1-aminomutase, found in Neisseria meningitidis serogroup B (strain ATCC BAA-335 / MC58).